A 197-amino-acid polypeptide reads, in one-letter code: Segregation and condensation protein B (197 aa).

Belongs to the ScpB family. As to quaternary structure, homodimer. Homodimerization may be required to stabilize the binding of ScpA to the Smc head domains. Component of a cohesin-like complex composed of ScpA, ScpB and the Smc homodimer, in which ScpA and ScpB bind to the head domain of Smc. The presence of the three proteins is required for the association of the complex with DNA.

The protein resides in the cytoplasm. Participates in chromosomal partition during cell division. May act via the formation of a condensin-like complex containing Smc and ScpA that pull DNA away from mid-cell into both cell halves. This is Segregation and condensation protein B from Halalkalibacterium halodurans (strain ATCC BAA-125 / DSM 18197 / FERM 7344 / JCM 9153 / C-125) (Bacillus halodurans).